The chain runs to 62 residues: Large ribosomal subunit protein bL28 (62 aa).

The interval 1-28 (MARVCTITGRKARSGNSRSHAMNATKRK) is disordered.

The protein belongs to the bacterial ribosomal protein bL28 family.

The polypeptide is Large ribosomal subunit protein bL28 (Bacillus anthracis (strain CDC 684 / NRRL 3495)).